We begin with the raw amino-acid sequence, 297 residues long: Protoheme IX farnesyltransferase (297 aa).

The next 9 helical transmembrane spans lie at 23 to 43, 49 to 69, 93 to 113, 117 to 137, 144 to 164, 171 to 191, 215 to 235, 238 to 258, and 275 to 295; these read VTQL…PGMP, VFGT…NCLI, IQVL…LYHL, LTMW…TVIL, NIVI…AAVA, AWVL…ALAL, RLHI…PYAI, SGAL…WYAW, and FSIL…WVGL.

Belongs to the UbiA prenyltransferase family. Protoheme IX farnesyltransferase subfamily.

The protein resides in the cell inner membrane. It catalyses the reaction heme b + (2E,6E)-farnesyl diphosphate + H2O = Fe(II)-heme o + diphosphate. Its pathway is porphyrin-containing compound metabolism; heme O biosynthesis; heme O from protoheme: step 1/1. Converts heme B (protoheme IX) to heme O by substitution of the vinyl group on carbon 2 of heme B porphyrin ring with a hydroxyethyl farnesyl side group. This chain is Protoheme IX farnesyltransferase, found in Bordetella bronchiseptica (strain ATCC BAA-588 / NCTC 13252 / RB50) (Alcaligenes bronchisepticus).